The following is a 531-amino-acid chain: Splicing factor ESS-2 (531 aa).

Disordered stretches follow at residues 104–163 and 453–531; these read RTPI…RKKK and PFAS…GDFF. Over residues 105–114 the composition is skewed to polar residues; the sequence is TPITTRSTTE. Composition is skewed to low complexity over residues 125-136 and 464-477; these read TPGPSSASTSSA and SRPS…TPGS. Positions 480–498 are enriched in polar residues; that stretch reads SRGSTTPGSSWSQGAQTPG.

Belongs to the ESS2 family.

The protein resides in the nucleus. Regulates pre-mRNA splicing. The protein is Splicing factor ESS-2 (ess-2) of Caenorhabditis elegans.